Here is a 461-residue protein sequence, read N- to C-terminus: Bifunctional protein GlmU (461 aa).

Residues 1-230 (MSKIHAVVLA…PEETLGVNDR (230 aa)) form a pyrophosphorylase region. UDP-N-acetyl-alpha-D-glucosamine-binding positions include 9–12 (LAAG), Lys23, Gln73, 78–79 (GT), 101–103 (YGD), Gly140, Glu155, Asn170, and Asn228. Asp103 serves as a coordination point for Mg(2+). Position 228 (Asn228) interacts with Mg(2+). The segment at 231-251 (VQLSEAEAYMKKRIMTGHMRN) is linker. Residues 252–461 (GVTIIDPTST…KMPRKGKKQS (210 aa)) are N-acetyltransferase. UDP-N-acetyl-alpha-D-glucosamine-binding residues include Arg333 and Lys351. The active-site Proton acceptor is His363. UDP-N-acetyl-alpha-D-glucosamine contacts are provided by Tyr366 and Asn377. Acetyl-CoA-binding positions include 386-387 (NY), Ala423, and Arg440.

The protein in the N-terminal section; belongs to the N-acetylglucosamine-1-phosphate uridyltransferase family. In the C-terminal section; belongs to the transferase hexapeptide repeat family. In terms of assembly, homotrimer. Mg(2+) serves as cofactor.

The protein resides in the cytoplasm. The catalysed reaction is alpha-D-glucosamine 1-phosphate + acetyl-CoA = N-acetyl-alpha-D-glucosamine 1-phosphate + CoA + H(+). It carries out the reaction N-acetyl-alpha-D-glucosamine 1-phosphate + UTP + H(+) = UDP-N-acetyl-alpha-D-glucosamine + diphosphate. It functions in the pathway nucleotide-sugar biosynthesis; UDP-N-acetyl-alpha-D-glucosamine biosynthesis; N-acetyl-alpha-D-glucosamine 1-phosphate from alpha-D-glucosamine 6-phosphate (route II): step 2/2. Its pathway is nucleotide-sugar biosynthesis; UDP-N-acetyl-alpha-D-glucosamine biosynthesis; UDP-N-acetyl-alpha-D-glucosamine from N-acetyl-alpha-D-glucosamine 1-phosphate: step 1/1. It participates in bacterial outer membrane biogenesis; LPS lipid A biosynthesis. Catalyzes the last two sequential reactions in the de novo biosynthetic pathway for UDP-N-acetylglucosamine (UDP-GlcNAc). The C-terminal domain catalyzes the transfer of acetyl group from acetyl coenzyme A to glucosamine-1-phosphate (GlcN-1-P) to produce N-acetylglucosamine-1-phosphate (GlcNAc-1-P), which is converted into UDP-GlcNAc by the transfer of uridine 5-monophosphate (from uridine 5-triphosphate), a reaction catalyzed by the N-terminal domain. The polypeptide is Bifunctional protein GlmU (Brevibacillus brevis (strain 47 / JCM 6285 / NBRC 100599)).